We begin with the raw amino-acid sequence, 296 residues long: Urease operon transcriptional activator (296 aa).

The region spanning 171–268 (QAITHLITQE…NMTPSQFRLQ (98 aa)) is the HTH araC/xylS-type domain. DNA-binding regions (H-T-H motif) lie at residues 188-209 (DDVAKALFTTPSTLRRHLNREG) and 235-258 (VFQISHRCGFGSNAYFCDVFKRKY).

Positive regulator of the expression of the urease operon. This Escherichia coli protein is Urease operon transcriptional activator (ureR).